Reading from the N-terminus, the 63-residue chain is Acrosin inhibitor 1 (63 aa).

One can recognise a Kazal-like domain in the interval 8 to 63; that stretch reads FGFPPDCKVYTEACTREYNPICDSAAKTYSNECTFCNEKMNNDADIHFNHFGECEY. 3 disulfides stabilise this stretch: cysteine 14–cysteine 43, cysteine 21–cysteine 40, and cysteine 29–cysteine 61.

As to expression, seminal plasma.

It localises to the secreted. In terms of biological role, strong inhibitor of acrosin. The sequence is that of Acrosin inhibitor 1 from Bos taurus (Bovine).